A 269-amino-acid polypeptide reads, in one-letter code: Rhamnulose-1-phosphate aldolase (269 aa).

Glutamate 119 is an active-site residue. Zn(2+) contacts are provided by histidine 142, histidine 144, and histidine 214.

The protein belongs to the aldolase class II family. RhaD subfamily. Zn(2+) serves as cofactor.

It localises to the cytoplasm. It carries out the reaction L-rhamnulose 1-phosphate = (S)-lactaldehyde + dihydroxyacetone phosphate. Its pathway is carbohydrate degradation; L-rhamnose degradation; glycerone phosphate from L-rhamnose: step 3/3. Functionally, catalyzes the reversible cleavage of L-rhamnulose-1-phosphate to dihydroxyacetone phosphate (DHAP) and L-lactaldehyde. This is Rhamnulose-1-phosphate aldolase from Bacteroides thetaiotaomicron (strain ATCC 29148 / DSM 2079 / JCM 5827 / CCUG 10774 / NCTC 10582 / VPI-5482 / E50).